Reading from the N-terminus, the 453-residue chain is Tubulin alpha-1/2/3 chain (453 aa).

Gln-11 serves as a coordination point for GTP. Lys-40 bears the N6-acetyllysine mark. Residues Glu-71, Ser-140, Gly-144, Thr-145, Thr-179, Asn-206, and Asn-228 each coordinate GTP. Mg(2+) is bound at residue Glu-71. The active site involves Glu-254. Residues 429–453 (EKDYEEVGTESQEGDGEEGEDGGDQ) are disordered. Residues 431-453 (DYEEVGTESQEGDGEEGEDGGDQ) show a composition bias toward acidic residues.

This sequence belongs to the tubulin family. Dimer of alpha and beta chains. A typical microtubule is a hollow water-filled tube with an outer diameter of 25 nm and an inner diameter of 15 nM. Alpha-beta heterodimers associate head-to-tail to form protofilaments running lengthwise along the microtubule wall with the beta-tubulin subunit facing the microtubule plus end conferring a structural polarity. Microtubules usually have 13 protofilaments but different protofilament numbers can be found in some organisms and specialized cells. It depends on Mg(2+) as a cofactor. Acetylation of alpha chains at Lys-40 stabilizes microtubules and affects affinity and processivity of microtubule motors. This modification has a role in multiple cellular functions, ranging from cell motility, cell cycle progression or cell differentiation to intracellular trafficking and signaling.

The protein resides in the cytoplasm. It is found in the cytoskeleton. The catalysed reaction is GTP + H2O = GDP + phosphate + H(+). Functionally, tubulin is the major constituent of microtubules, a cylinder consisting of laterally associated linear protofilaments composed of alpha- and beta-tubulin heterodimers. Microtubules grow by the addition of GTP-tubulin dimers to the microtubule end, where a stabilizing cap forms. Below the cap, tubulin dimers are in GDP-bound state, owing to GTPase activity of alpha-tubulin. The sequence is that of Tubulin alpha-1/2/3 chain (TBA1) from Naegleria gruberi (Amoeba).